Here is a 287-residue protein sequence, read N- to C-terminus: Phosphatidylserine decarboxylase proenzyme (287 aa).

Active-site charge relay system; for autoendoproteolytic cleavage activity residues include D90, H147, and S252. S252 acts as the Schiff-base intermediate with substrate; via pyruvic acid; for decarboxylase activity in catalysis. The residue at position 252 (S252) is a Pyruvic acid (Ser); by autocatalysis.

This sequence belongs to the phosphatidylserine decarboxylase family. PSD-B subfamily. Prokaryotic type I sub-subfamily. In terms of assembly, heterodimer of a large membrane-associated beta subunit and a small pyruvoyl-containing alpha subunit. Pyruvate serves as cofactor. Is synthesized initially as an inactive proenzyme. Formation of the active enzyme involves a self-maturation process in which the active site pyruvoyl group is generated from an internal serine residue via an autocatalytic post-translational modification. Two non-identical subunits are generated from the proenzyme in this reaction, and the pyruvate is formed at the N-terminus of the alpha chain, which is derived from the carboxyl end of the proenzyme. The autoendoproteolytic cleavage occurs by a canonical serine protease mechanism, in which the side chain hydroxyl group of the serine supplies its oxygen atom to form the C-terminus of the beta chain, while the remainder of the serine residue undergoes an oxidative deamination to produce ammonia and the pyruvoyl prosthetic group on the alpha chain. During this reaction, the Ser that is part of the protease active site of the proenzyme becomes the pyruvoyl prosthetic group, which constitutes an essential element of the active site of the mature decarboxylase.

The protein localises to the cell membrane. The enzyme catalyses a 1,2-diacyl-sn-glycero-3-phospho-L-serine + H(+) = a 1,2-diacyl-sn-glycero-3-phosphoethanolamine + CO2. The protein operates within phospholipid metabolism; phosphatidylethanolamine biosynthesis; phosphatidylethanolamine from CDP-diacylglycerol: step 2/2. Its function is as follows. Catalyzes the formation of phosphatidylethanolamine (PtdEtn) from phosphatidylserine (PtdSer). The chain is Phosphatidylserine decarboxylase proenzyme from Pseudomonas putida (strain ATCC 700007 / DSM 6899 / JCM 31910 / BCRC 17059 / LMG 24140 / F1).